The primary structure comprises 166 residues: Large ribosomal subunit protein uL10 (166 aa).

The protein belongs to the universal ribosomal protein uL10 family. As to quaternary structure, part of the ribosomal stalk of the 50S ribosomal subunit. The N-terminus interacts with L11 and the large rRNA to form the base of the stalk. The C-terminus forms an elongated spine to which L12 dimers bind in a sequential fashion forming a multimeric L10(L12)X complex.

Its function is as follows. Forms part of the ribosomal stalk, playing a central role in the interaction of the ribosome with GTP-bound translation factors. This chain is Large ribosomal subunit protein uL10, found in Streptococcus pneumoniae serotype 19F (strain G54).